Reading from the N-terminus, the 633-residue chain is Probably inactive receptor-like protein kinase At2g46850 (633 aa).

An N-terminal signal peptide occupies residues 1-28 (MPPLFLPSSSSALFLLLLLLLTLQTLTS). At 29-285 (ISLSQPQALR…IKKHNGKKLT (257 aa)) the chain is on the extracellular side. 3 N-linked (GlcNAc...) asparagine glycosylation sites follow: asparagine 45, asparagine 69, and asparagine 231. A helical transmembrane segment spans residues 286–306 (VLAGVLAPLFILGSLLALFCL). Residues 307–633 (LKRPVTSHKD…SPDSIYLPKT (327 aa)) are Cytoplasmic-facing. The 279-residue stretch at 355 to 633 (FQDSQKLTQG…SPDSIYLPKT (279 aa)) folds into the Protein kinase domain. ATP contacts are provided by residues 361–369 (LTQGKTGTI) and lysine 384.

It belongs to the protein kinase superfamily. Ser/Thr protein kinase family.

Its subcellular location is the membrane. In Arabidopsis thaliana (Mouse-ear cress), this protein is Probably inactive receptor-like protein kinase At2g46850.